The primary structure comprises 235 residues: 2-C-methyl-D-erythritol 4-phosphate cytidylyltransferase (235 aa).

It belongs to the IspD/TarI cytidylyltransferase family. IspD subfamily.

The enzyme catalyses 2-C-methyl-D-erythritol 4-phosphate + CTP + H(+) = 4-CDP-2-C-methyl-D-erythritol + diphosphate. It functions in the pathway isoprenoid biosynthesis; isopentenyl diphosphate biosynthesis via DXP pathway; isopentenyl diphosphate from 1-deoxy-D-xylulose 5-phosphate: step 2/6. Functionally, catalyzes the formation of 4-diphosphocytidyl-2-C-methyl-D-erythritol from CTP and 2-C-methyl-D-erythritol 4-phosphate (MEP). The polypeptide is 2-C-methyl-D-erythritol 4-phosphate cytidylyltransferase (Pseudomonas putida (strain GB-1)).